The chain runs to 339 residues: 1-aminocyclopropane-1-carboxylate deaminase (339 aa).

An N6-(pyridoxal phosphate)lysine modification is found at K52. S79 functions as the Nucleophile in the catalytic mechanism.

This sequence belongs to the ACC deaminase/D-cysteine desulfhydrase family. In terms of assembly, homotrimer. Pyridoxal 5'-phosphate is required as a cofactor.

The enzyme catalyses 1-aminocyclopropane-1-carboxylate + H2O = 2-oxobutanoate + NH4(+). Catalyzes a cyclopropane ring-opening reaction, the irreversible conversion of 1-aminocyclopropane-1-carboxylate (ACC) to ammonia and alpha-ketobutyrate. Allows growth on ACC as a nitrogen source. The chain is 1-aminocyclopropane-1-carboxylate deaminase from Rhizobium leguminosarum bv. viciae.